The sequence spans 182 residues: uncharacterized protein (182 aa).

To H.pylori HP0274.

This is an uncharacterized protein from Methanocaldococcus jannaschii (strain ATCC 43067 / DSM 2661 / JAL-1 / JCM 10045 / NBRC 100440) (Methanococcus jannaschii).